The following is a 470-amino-acid chain: Chitin deacetylase 1 (470 aa).

The N-terminal stretch at 1–19 is a signal peptide; the sequence is MFTFAAFSALLISLAGVVA. Asparagine 101 and asparagine 121 each carry an N-linked (GlcNAc...) asparagine glycan. Cysteine 155 and cysteine 363 are oxidised to a cystine. One can recognise a NodB homology domain in the interval 159 to 358; that stretch reads NVWGLSYDDG…VLANGTYQLK (200 aa). Residue aspartate 166 is the Proton acceptor of the active site. Residue aspartate 166 participates in acetate binding. Aspartate 167, histidine 216, and histidine 220 together coordinate Co(2+). Acetate is bound at residue tyrosine 257. The active-site Proton donor is the histidine 331. 3 N-linked (GlcNAc...) asparagine glycosylation sites follow: asparagine 352, asparagine 378, and asparagine 440. The disordered stretch occupies residues 406 to 447; it reads EVSAPSEATGSTAAGSAASTTSGSGASASTGAASNTSSSGSG. Over residues 408–447 the composition is skewed to low complexity; the sequence is SAPSEATGSTAAGSAASTTSGSGASASTGAASNTSSSGSG. Serine 444 carries GPI-anchor amidated serine lipidation. Residues 445-470 constitute a propeptide, removed in mature form; sequence GSGRSATMGGALIALAAVAVGMVYVA.

The protein belongs to the polysaccharide deacetylase family. Co(2+) is required as a cofactor.

Its subcellular location is the secreted. The protein resides in the cell wall. It localises to the cell membrane. The enzyme catalyses [(1-&gt;4)-N-acetyl-beta-D-glucosaminyl](n) + n H2O = chitosan + n acetate. Hydrolyzes the N-acetamido groups of N-acetyl-D-glucosamine residues in chitin to form chitosan and acetate. Chitosan is required to anchor melanin to the cell wall, for maintenance of cell wall integrity, and for proper cytokinesis. Plays a major role in synthesizing cell wall chitosan during host infection; chitosan offers an advantage during infection as it is less readily detected than chitin by host immunosurveillance mechanisms. The protein is Chitin deacetylase 1 of Cryptococcus neoformans var. grubii serotype A (strain H99 / ATCC 208821 / CBS 10515 / FGSC 9487) (Filobasidiella neoformans var. grubii).